The primary structure comprises 515 residues: ATP synthase subunit alpha (515 aa).

An ATP-binding site is contributed by 169-176 (GDRQTGKT).

The protein belongs to the ATPase alpha/beta chains family. F-type ATPases have 2 components, CF(1) - the catalytic core - and CF(0) - the membrane proton channel. CF(1) has five subunits: alpha(3), beta(3), gamma(1), delta(1), epsilon(1). CF(0) has three main subunits: a(1), b(2) and c(9-12). The alpha and beta chains form an alternating ring which encloses part of the gamma chain. CF(1) is attached to CF(0) by a central stalk formed by the gamma and epsilon chains, while a peripheral stalk is formed by the delta and b chains.

It is found in the cell inner membrane. It carries out the reaction ATP + H2O + 4 H(+)(in) = ADP + phosphate + 5 H(+)(out). Its function is as follows. Produces ATP from ADP in the presence of a proton gradient across the membrane. The alpha chain is a regulatory subunit. This Neisseria gonorrhoeae (strain ATCC 700825 / FA 1090) protein is ATP synthase subunit alpha.